We begin with the raw amino-acid sequence, 550 residues long: Calcium-dependent protein kinase 20 (550 aa).

The interval 1–58 is disordered; it reads MGNCCVTPEGSGRGRKKQQQEQKQKQKEPKQQQQQQKKGKKPNPFSIEYNRSSAPSGH. A lipid anchor (N-myristoyl glycine) is attached at Gly2. Over residues 18–30 the composition is skewed to basic and acidic residues; the sequence is QQQEQKQKQKEPK. The 259-residue stretch at 75–333 folds into the Protein kinase domain; that stretch reads YELGGELGRG…AQQVLDHPWL (259 aa). Residues 81–89 and Lys104 each bind ATP; that span reads LGRGEFGVT. Catalysis depends on Asp199, which acts as the Proton acceptor. Positions 339–369 are autoinhibitory domain; that stretch reads APNVNLGETVKARLQQFSVMNKFKKHALRVI. 4 consecutive EF-hand domains span residues 376–411, 412–447, 448–483, and 484–519; these read EEVAGIKDMFEKMDLNKDNMINFDELKLGLHKLGHQ, MADADVQILMDAADVDGNGSLDYGEFVALSVHLRKI, GNDEHLHKAFAYFDRNQSGYIEIDELRESLADDLGA, and NHEEVINAIIRDVDTDKDGKISYDEFAAMMKAGTDW. Residues Asp389, Asn391, Asp393, Met395, Glu400, Asp425, Asp427, Asn429, Ser431, Glu436, Asp461, Asn463, Ser465, Tyr467, Glu472, Asp497, Asp499, Asp501, Lys503, and Glu508 each contribute to the Ca(2+) site.

Belongs to the protein kinase superfamily. Ser/Thr protein kinase family. CDPK subfamily. As to expression, expressed in roots and leaf blades.

Its subcellular location is the membrane. It catalyses the reaction L-seryl-[protein] + ATP = O-phospho-L-seryl-[protein] + ADP + H(+). The enzyme catalyses L-threonyl-[protein] + ATP = O-phospho-L-threonyl-[protein] + ADP + H(+). Its activity is regulated as follows. Activated by calcium. Autophosphorylation may play an important role in the regulation of the kinase activity. May play a role in signal transduction pathways that involve calcium as a second messenger. This chain is Calcium-dependent protein kinase 20, found in Oryza sativa subsp. japonica (Rice).